The following is an 82-amino-acid chain: Small ribosomal subunit protein bS16 (82 aa).

It belongs to the bacterial ribosomal protein bS16 family.

The sequence is that of Small ribosomal subunit protein bS16 from Enterobacter sp. (strain 638).